The following is a 380-amino-acid chain: G-protein coupled receptor (380 aa).

Helical transmembrane passes span 26 to 46 (VISI…YLGI), 60 to 80 (LVCC…PLWV), 97 to 117 (FAGM…VIVT), 145 to 165 (VTIL…ETSI), 184 to 204 (AALG…HIIL), 220 to 240 (ILMW…SLSA), and 275 to 295 (VAML…VPLI). The cysteines at positions 95 and 170 are disulfide-linked. The disordered stretch occupies residues 328–380 (SQSKLLRGEENPNYDYSPKSVRIKPLKSPGGGDNSSLKDEGYDEESQNGFSIG).

This sequence belongs to the G-protein coupled receptor 1 family.

It is found in the host membrane. The polypeptide is G-protein coupled receptor (Elephas maximus (Indian elephant)).